A 497-amino-acid polypeptide reads, in one-letter code: Cysteine--tRNA ligase (497 aa).

Residue Cys46 participates in Zn(2+) binding. Positions 48–58 (PTVYSDAHLGH) match the 'HIGH' region motif. Zn(2+) is bound by residues Cys237, His262, and Glu266. Positions 293–297 (KMSKS) match the 'KMSKS' region motif. Lys296 serves as a coordination point for ATP.

Belongs to the class-I aminoacyl-tRNA synthetase family. In terms of assembly, monomer. Zn(2+) is required as a cofactor.

Its subcellular location is the cytoplasm. The catalysed reaction is tRNA(Cys) + L-cysteine + ATP = L-cysteinyl-tRNA(Cys) + AMP + diphosphate. The sequence is that of Cysteine--tRNA ligase from Deinococcus geothermalis (strain DSM 11300 / CIP 105573 / AG-3a).